We begin with the raw amino-acid sequence, 270 residues long: Regulatory protein RecX (270 aa).

It belongs to the RecX family.

It localises to the cytoplasm. Its function is as follows. Modulates RecA activity. This is Regulatory protein RecX from Bacillus mycoides (strain KBAB4) (Bacillus weihenstephanensis).